We begin with the raw amino-acid sequence, 467 residues long: Plasma alpha-L-fucosidase (467 aa).

Positions methionine 1–alanine 28 are cleaved as a signal peptide. N-linked (GlcNAc...) asparagine glycosylation is found at asparagine 171 and asparagine 239. Serine 301 is subject to Phosphoserine; by FAM20C. A glycan (N-linked (GlcNAc...) asparagine) is linked at asparagine 377.

It belongs to the glycosyl hydrolase 29 family. In terms of assembly, homotetramer.

The protein localises to the secreted. The catalysed reaction is an alpha-L-fucoside + H2O = L-fucose + an alcohol. Its function is as follows. Alpha-L-fucosidase is responsible for hydrolyzing the alpha-1,6-linked fucose joined to the reducing-end N-acetylglucosamine of the carbohydrate moieties of glycoproteins. The chain is Plasma alpha-L-fucosidase (FUCA2) from Homo sapiens (Human).